The following is a 184-amino-acid chain: Probable RNA 2'-phosphotransferase (184 aa).

It belongs to the KptA/TPT1 family.

Functionally, removes the 2'-phosphate from RNA via an intermediate in which the phosphate is ADP-ribosylated by NAD followed by a presumed transesterification to release the RNA and generate ADP-ribose 1''-2''-cyclic phosphate (APPR&gt;P). May function as an ADP-ribosylase. This chain is Probable RNA 2'-phosphotransferase, found in Escherichia coli O6:K15:H31 (strain 536 / UPEC).